Here is a 596-residue protein sequence, read N- to C-terminus: Phosphoenolpyruvate carboxykinase [GTP] (596 aa).

Residues Arg77 and 205–207 each bind substrate; that span reads YGG. The Mn(2+) site is built by Lys214 and His234. Ser256 serves as a coordination point for substrate. 257-262 lines the GTP pocket; that stretch reads ACGKTN. Residue Cys258 is part of the active site. Asp283 serves as a coordination point for Mn(2+). The interval 362–388 is disordered; that stretch reads KKGSTEKAAHPNSRFTAPAKNNPAISP. Residue 373-375 coordinates substrate; the sequence is NSR. GTP-binding positions include Arg375, Arg406, and 499–502; that span reads YGDN.

This sequence belongs to the phosphoenolpyruvate carboxykinase [GTP] family. Monomer. Requires Mn(2+) as cofactor.

The protein resides in the cytoplasm. It catalyses the reaction oxaloacetate + GTP = phosphoenolpyruvate + GDP + CO2. Its pathway is carbohydrate biosynthesis; gluconeogenesis. Functionally, catalyzes the conversion of oxaloacetate (OAA) to phosphoenolpyruvate (PEP), the rate-limiting step in the metabolic pathway that produces glucose from lactate and other precursors derived from the citric acid cycle. This is Phosphoenolpyruvate carboxykinase [GTP] from Anaeromyxobacter dehalogenans (strain 2CP-C).